The primary structure comprises 347 residues: UPF0324 membrane protein Atu0671 (347 aa).

The next 10 helical transmembrane spans lie at 15–37, 50–72, 105–127, 140–162, 172–194, 201–223, 233–250, 263–282, 287–309, and 322–344; these read LRWLSPLLPGILICAAVSCAAIL, WLGDLVLAILIGTLLRSLVSLPV, AGGLLIGGIALIVALSLVFSYAA, LIACGNSICGNSAIAAAAPAIGA, AFTAVLGVVAVLLMPFLPQLLGL, IFAGLTVYAVPQVLAATAPLGAV, LIRVLMLGPVIATLSVIH, MVPWFIIGFVLMIMARSFGL, LLSPVASLSNILTIMSMAALGLS, and VIIAASLSLVLLGVLSFGLILLT.

This sequence belongs to the UPF0324 family.

It localises to the cell membrane. The sequence is that of UPF0324 membrane protein Atu0671 from Agrobacterium fabrum (strain C58 / ATCC 33970) (Agrobacterium tumefaciens (strain C58)).